A 95-amino-acid chain; its full sequence is Large ribosomal subunit protein uL23 (95 aa).

Belongs to the universal ribosomal protein uL23 family. As to quaternary structure, part of the 50S ribosomal subunit. Contacts protein L29, and trigger factor when it is bound to the ribosome.

One of the early assembly proteins it binds 23S rRNA. One of the proteins that surrounds the polypeptide exit tunnel on the outside of the ribosome. Forms the main docking site for trigger factor binding to the ribosome. This chain is Large ribosomal subunit protein uL23, found in Desulfitobacterium hafniense (strain DSM 10664 / DCB-2).